We begin with the raw amino-acid sequence, 409 residues long: Coagulation factor IX (409 aa).

Residues Tyr-1, Asn-2, Glu-7, Glu-8, Glu-16, Glu-18, Glu-21, Glu-22, Glu-27, Glu-28, and Glu-31 each coordinate Ca(2+). In terms of domain architecture, Gla spans 1–47 (YNSGKLEESFVRGNLERECIEEKCSFEEAREVFENTEKTNEFWKQYV). 12 positions are modified to 4-carboxyglutamate: Glu-7, Glu-8, Glu-16, Glu-18, Glu-21, Glu-22, Glu-27, Glu-28, Glu-31, Glu-34, Glu-37, and Glu-41. Glu-16 contacts Mg(2+). Cys-19 and Cys-24 are joined by a disulfide. Glu-21 contacts Mg(2+). Glu-27 is a Mg(2+) binding site. Residue Glu-31 coordinates Mg(2+). Ca(2+) contacts are provided by Glu-37, Glu-41, Asp-48, Gly-49, and Gln-51. 2 residues coordinate Mg(2+): Glu-37 and Glu-41. The EGF-like 1; calcium-binding domain occupies 48–84 (DGDQCEPNPCLNGGLCKDDINSYECWCQVGFEGKNCE). Cystine bridges form between Cys-52-Cys-63, Cys-57-Cys-72, Cys-74-Cys-83, Cys-89-Cys-100, Cys-96-Cys-110, Cys-112-Cys-125, Cys-133-Cys-291, Cys-208-Cys-224, Cys-338-Cys-352, and Cys-363-Cys-391. Positions 65 and 66 each coordinate Ca(2+). Position 65 is a (3R)-3-hydroxyaspartate (Asp-65). Position 69 is a phosphoserine (Ser-69). The 42-residue stretch at 85–126 (LDATCNIKNGRCKQFCKTGADSKVLCSCTTGYRLAPDQKSCK) folds into the EGF-like 2 domain. The propeptide at 148–182 (AEIIFSNMDYENSTEVEPILDSLTESNQSSDDFIR) is activation peptide. A Sulfotyrosine modification is found at Tyr-157. Ser-160 is subject to Phosphoserine. Thr-161 is modified (phosphothreonine; alternate). Thr-161 carries an O-linked (GalNAc...) threonine; alternate glycan. Thr-171 carries O-linked (GalNAc...) threonine glycosylation. Asn-174 carries an N-linked (GlcNAc...) asparagine glycan. In terms of domain architecture, Peptidase S1 spans 183–409 (IVGGENAKPG…YTKVSRYVNW (227 aa)). His-223 acts as the Charge relay system in catalysis. Positions 237, 239, 242, 244, and 247 each coordinate Ca(2+). An N-linked (GlcNAc...) asparagine glycan is attached at Asn-262. Catalysis depends on Asp-271, which acts as the Charge relay system. The Charge relay system role is filled by Ser-367.

It belongs to the peptidase S1 family. In terms of assembly, heterodimer of a light chain and a heavy chain; disulfide-linked. Interacts (inactive and activated) with F11 (activated) in calcium-dependent manner. Interacts with SERPINC1. Activated by factor XIa, which excises the activation peptide. The propeptide can also be removed by snake venom protease. Activated by coagulation factor VIIa-tissue factor (F7-F3) complex in calcium-dependent manner. In terms of processing, the iron and 2-oxoglutarate dependent 3-hydroxylation of aspartate and asparagine is (R) stereospecific within EGF domains.

Its subcellular location is the secreted. The catalysed reaction is Selective cleavage of Arg-|-Ile bond in factor X to form factor Xa.. In terms of biological role, factor IX is a vitamin K-dependent plasma protein that participates in the intrinsic pathway of blood coagulation by converting factor X to its active form in the presence of Ca(2+) ions, phospholipids, and factor VIIIa. The polypeptide is Coagulation factor IX (F9) (Sus scrofa (Pig)).